Reading from the N-terminus, the 333-residue chain is UPF0284 protein TGAM_0534 (333 aa).

Belongs to the UPF0284 family.

The chain is UPF0284 protein TGAM_0534 from Thermococcus gammatolerans (strain DSM 15229 / JCM 11827 / EJ3).